The following is a 475-amino-acid chain: FAD-dependent monooxygenase janM (475 aa).

The helical transmembrane segment at 8 to 24 threads the bilayer; that stretch reads VIIVGGSIGGLTLAHCL. FAD is bound by residues glutamate 35, glycine 49, and arginine 108. Asparagine 147 carries an N-linked (GlcNAc...) asparagine glycan. FAD-binding residues include aspartate 299 and alanine 312. Residues 432 to 451 form a helical membrane-spanning segment; it reads GWRFHAMLCILMLAILYTWV.

Belongs to the paxM FAD-dependent monooxygenase family. The cofactor is FAD.

It localises to the membrane. Its pathway is secondary metabolite biosynthesis. FAD-dependent monooxygenase; part of the gene cluster that mediates the biosynthesis of the indole diterpenes janthitremanes such as shearinine K or shearinine A. The geranylgeranyl diphosphate (GGPP) synthase janG catalyzes the first step in janthitremane biosynthesis via conversion of farnesyl pyrophosphate and isopentyl pyrophosphate into geranylgeranyl pyrophosphate (GGPP). Condensation of indole-3-glycerol phosphate with GGPP by the prenyl transferase janC then forms 3-geranylgeranylindole (3-GGI). Epoxidation by the FAD-dependent monooxygenase janM leads to a epoxidized-GGI that is substrate of the terpene cyclase janB for cyclization to yield paspaline. Paspaline is subsequently converted to 13-desoxypaspaline by the cytochrome P450 monooxygenase janP, via beta-PC-M6 in a series of alpha-face oxidations. The cytochrome P450 monooxygenase janQ is proposed to carry out sequential beta-face oxidation steps at C-7 and C-13 of 13-desoxypaspaline to form paspalicine and paspalinine respectively. The indole diterpene prenyltransferase janD may then convert paspalinine into shearinine K which is substrate of janO and/or additional enzymes for oxidation and cyclization to generate shearinine A. This is FAD-dependent monooxygenase janM from Penicillium janthinellum (Penicillium vitale).